The sequence spans 496 residues: Sugar transporter ERD6 (496 aa).

The next 6 membrane-spanning stretches (helical) occupy residues Val58–Phe78, Val94–Phe114, Met128–Ala148, Leu156–Ile176, Gly183–Ile203, and Leu211–Pro231. A Phosphoserine modification is found at Ser256. The next 6 helical transmembrane spans lie at Tyr292–Val312, Ile329–Val349, Ala364–Leu384, Ile394–Ile414, Leu430–Leu450, and Gly456–Val476.

Belongs to the major facilitator superfamily. Sugar transporter (TC 2.A.1.1) family. In terms of tissue distribution, expressed in both shoots and roots. In roots, expressed in epidermal cells and especially strongly in cortex cells. In flowers, expressed in sepals.

Its subcellular location is the membrane. In terms of biological role, sugar transporter. This chain is Sugar transporter ERD6 (ERD6), found in Arabidopsis thaliana (Mouse-ear cress).